Reading from the N-terminus, the 302-residue chain is Coenzyme PQQ synthesis protein B (302 aa).

It belongs to the PqqB family.

It functions in the pathway cofactor biosynthesis; pyrroloquinoline quinone biosynthesis. Functionally, may be involved in the transport of PQQ or its precursor to the periplasm. The protein is Coenzyme PQQ synthesis protein B of Azotobacter vinelandii (strain DJ / ATCC BAA-1303).